Here is a 392-residue protein sequence, read N- to C-terminus: Extracellular metalloproteinase 4 (392 aa).

A propeptide spanning residues 1-9 (VHSVVDYVS) is cleaved from the precursor. Asparagine 27 and asparagine 176 each carry an N-linked (GlcNAc...) asparagine glycan. Histidine 193 is a Zn(2+) binding site. Glutamate 194 is a catalytic residue. Position 197 (histidine 197) interacts with Zn(2+). 2 N-linked (GlcNAc...) asparagine glycosylation sites follow: asparagine 359 and asparagine 385.

This sequence belongs to the peptidase M36 family. Requires Zn(2+) as cofactor.

The protein resides in the secreted. Its function is as follows. Secreted metalloproteinase probably acting as a virulence factor. The sequence is that of Extracellular metalloproteinase 4 (MEP4) from Trichophyton violaceum.